A 363-amino-acid chain; its full sequence is 3-isopropylmalate dehydrogenase (363 aa).

78–91 (GPKWENLPPESQPE) serves as a coordination point for NAD(+). The substrate site is built by arginine 99, arginine 109, arginine 138, and aspartate 227. Residues aspartate 227, aspartate 251, and aspartate 255 each coordinate Mg(2+). 285-297 (GSAPDIAGKNIAN) lines the NAD(+) pocket.

The protein belongs to the isocitrate and isopropylmalate dehydrogenases family. LeuB type 1 subfamily. Homodimer. Mg(2+) is required as a cofactor. Mn(2+) serves as cofactor.

The protein resides in the cytoplasm. The enzyme catalyses (2R,3S)-3-isopropylmalate + NAD(+) = 4-methyl-2-oxopentanoate + CO2 + NADH. Its pathway is amino-acid biosynthesis; L-leucine biosynthesis; L-leucine from 3-methyl-2-oxobutanoate: step 3/4. Its function is as follows. Catalyzes the oxidation of 3-carboxy-2-hydroxy-4-methylpentanoate (3-isopropylmalate) to 3-carboxy-4-methyl-2-oxopentanoate. The product decarboxylates to 4-methyl-2 oxopentanoate. This is 3-isopropylmalate dehydrogenase from Salmonella typhi.